Consider the following 351-residue polypeptide: Protein IBD2 (351 aa).

Over residues 1–14 the composition is skewed to polar residues; it reads MTPTNQSSGTTNAS. The tract at residues 1–20 is disordered; that stretch reads MTPTNQSSGTTNASVEVLSE. Phosphoserine is present on residues serine 100 and serine 106. A Phosphothreonine modification is found at threonine 211. The segment at 223 to 249 is disordered; sequence LHGDGQHSISSRKHSRSKNSKKNGHVR. Positions 232–249 are enriched in basic residues; it reads SSRKHSRSKNSKKNGHVR.

It belongs to the IBD2 family. In terms of assembly, interacts with BFA1.

The protein localises to the cytoplasm. The protein resides in the cytoskeleton. Its subcellular location is the spindle pole. In terms of biological role, part of a checkpoint which monitors spindle integrity and prevents premature exit from mitosis. This cell-cycle arrest depends upon inhibition of the G-protein TEM1 by the BFA1/BUB2 complex. In Saccharomyces cerevisiae (strain ATCC 204508 / S288c) (Baker's yeast), this protein is Protein IBD2 (IBD2).